The primary structure comprises 264 residues: Proliferating cell nuclear antigen 2 (264 aa).

The protein belongs to the PCNA family. Homotrimer. Oligomer. Interacts with ORC1 (via PIP-box motif). Interacts with FEN1.

It localises to the nucleus. The protein localises to the chromosome. The protein resides in the cytoplasm. Functionally, may be involved in DNA damage response. Appears not to be involved in DNA replication in trophozoites. The polypeptide is Proliferating cell nuclear antigen 2 (Plasmodium falciparum (isolate 3D7)).